The following is a 327-amino-acid chain: Clavesin-2 (327 aa).

The region spanning 96-257 is the CRAL-TRIO domain; the sequence is IKQALKDGFP…EFGGMLPPYD (162 aa). Residues 289-327 are disordered; it reads DKELSPKSMKRSQSVVDPTALKRMDKSEEENMQPLLALD.

As to quaternary structure, forms a complex with clathrin heavy chain and gamma-adaptin.

The protein localises to the golgi apparatus. It is found in the trans-Golgi network membrane. The protein resides in the early endosome membrane. It localises to the cytoplasmic vesicle. Its subcellular location is the clathrin-coated vesicle. Required for normal morphology of late endosomes and/or lysosomes in neurons. Binds phosphatidylinositol 3,5-bisphosphate (PtdIns(3,5)P2). This chain is Clavesin-2 (Clvs2), found in Mus musculus (Mouse).